We begin with the raw amino-acid sequence, 235 residues long: Sugar fermentation stimulation protein homolog (235 aa).

Belongs to the SfsA family.

The protein is Sugar fermentation stimulation protein homolog of Aliivibrio salmonicida (strain LFI1238) (Vibrio salmonicida (strain LFI1238)).